The primary structure comprises 118 residues: Large ribosomal subunit protein bL20 (118 aa).

The protein belongs to the bacterial ribosomal protein bL20 family.

Its function is as follows. Binds directly to 23S ribosomal RNA and is necessary for the in vitro assembly process of the 50S ribosomal subunit. It is not involved in the protein synthesizing functions of that subunit. This Trichodesmium erythraeum (strain IMS101) protein is Large ribosomal subunit protein bL20.